We begin with the raw amino-acid sequence, 120 residues long: U13-lycotoxin-Ls1a (120 aa).

The signal sequence occupies residues 1–16; that stretch reads MKTLFVLISILYAVYC. Positions 17 to 54 are excised as a propeptide; that stretch reads FSSEEDVDSAYLANELEPVEDINSEQYAALEPKEEQER. 4 disulfide bridges follow: cysteine 56-cysteine 70, cysteine 63-cysteine 76, cysteine 69-cysteine 87, and cysteine 78-cysteine 85. An Agouti domain is found at 56–95; the sequence is CADMGQDCKDDCDCCLNIATCNCWFGRYFCSCTFGDYQTC.

Belongs to the neurotoxin 05 (agouti) family. Contains 6 disulfide bonds. As to expression, expressed by the venom gland.

It is found in the secreted. This chain is U13-lycotoxin-Ls1a, found in Lycosa singoriensis (Wolf spider).